The sequence spans 449 residues: Capsid protein (449 aa).

Residues 1 to 43 are DNA-binding; the sequence is MERRARRPRGRFYAFRRGRWNHLKRLRRRYKFRHRRRQRYRRR. Positions 6 to 47 are nuclear localization signals; the sequence is RRPRGRFYAFRRGRWNHLKRLRRRYKFRHRRRQRYRRRAFRK.

This sequence belongs to the gyrovirus capsid protein family. In terms of assembly, homomultimer (Potential). Interacts with Rep; this interaction relocates Rep into the nucleus.

Its subcellular location is the host nucleus. It localises to the virion. Self-assembles to form the virion icosahedral capsid with a T=1 symmetry. This very small capsid (25 nm in diameter) allows the virus to be very stable in the environment and resistant to some disinfectants, including detergents. Essential for the initial attachment to host receptors. After attachment, the virus is endocytosed and traffics to the nucleus. The capsid protein binds and transports the viral genome and Rep across the nuclear envelope. This Chicken anemia virus (isolate Japan 82-2) (CAV) protein is Capsid protein (VP1).